The following is a 463-amino-acid chain: UDP-N-acetylmuramoylalanine--D-glutamate ligase (463 aa).

126–132 (GSNGKST) is a binding site for ATP.

Belongs to the MurCDEF family.

Its subcellular location is the cytoplasm. It catalyses the reaction UDP-N-acetyl-alpha-D-muramoyl-L-alanine + D-glutamate + ATP = UDP-N-acetyl-alpha-D-muramoyl-L-alanyl-D-glutamate + ADP + phosphate + H(+). The protein operates within cell wall biogenesis; peptidoglycan biosynthesis. Cell wall formation. Catalyzes the addition of glutamate to the nucleotide precursor UDP-N-acetylmuramoyl-L-alanine (UMA). In Idiomarina loihiensis (strain ATCC BAA-735 / DSM 15497 / L2-TR), this protein is UDP-N-acetylmuramoylalanine--D-glutamate ligase.